The primary structure comprises 201 residues: MSFSTLMDKRERGSFDSQFLIAMPGLDDGNFARSVIYICAHSDAGAMGFIINRPQQITFTDILLHLKLVDSNDAIMLPNRTREFPIQCGGPVESGRGFVLHSDDYLSESSIPVSDDISLTATLDIVRAISNGRGPQKATMMLGYAGWGPGQLENEIANNGWLNCPAAEELIFDRGLDNKYERALALMGVDARMLSTDAGHA.

The protein belongs to the UPF0301 (AlgH) family.

The protein is UPF0301 protein Atu0781 of Agrobacterium fabrum (strain C58 / ATCC 33970) (Agrobacterium tumefaciens (strain C58)).